We begin with the raw amino-acid sequence, 464 residues long: Probable mannosyltransferase KTR4 (464 aa).

The Cytoplasmic portion of the chain corresponds to 1–11 (MRFLSKRILKP). The chain crosses the membrane as a helical; Signal-anchor for type II membrane protein span at residues 12 to 32 (VLSVIILISIAVTVVLYFLTA). Positions 33–130 (NENYLQAVKD…NLVRSGDPLA (98 aa)) are stem region. The Lumenal portion of the chain corresponds to 33 to 464 (NENYLQAVKD…SMSEEELEMY (432 aa)). A catalytic region spans residues 131-464 (GKAKGTILSL…SMSEEELEMY (334 aa)). Residue glutamate 352 is the Nucleophile of the active site.

This sequence belongs to the glycosyltransferase 15 family.

It localises to the membrane. Possible glycosyltransferase that transfers an alpha-D-mannosyl residue from GDP-mannose into lipid-linked oligosaccharide, forming an alpha-(1-&gt;2)-D-mannosyl-D-mannose linkage. In Saccharomyces cerevisiae (strain ATCC 204508 / S288c) (Baker's yeast), this protein is Probable mannosyltransferase KTR4 (KTR4).